We begin with the raw amino-acid sequence, 348 residues long: 2-heptyl-4(1H)-quinolone synthase subunit PqsC (348 aa).

The active-site Acyl-thioester intermediate is Cys129. The active site involves His269.

The protein belongs to the thiolase-like superfamily. FabH family. In terms of assembly, forms a tight complex with PqsB.

The protein localises to the cytoplasm. It catalyses the reaction (2-aminobenzoyl)acetate + octanoyl-CoA + H(+) = 2-heptyl-4(1H)-quinolone + CO2 + CoA + H2O. Folding of PqsC and binding of octanoate are promoted by PqsB. Binding of the octanoyl group probably increases the binding affinity of the complex for 2-ABA. Activity of the complex is inhibited by 2-aminoacetophenone (2-AA). Its function is as follows. Required for the biosynthesis of the quorum-sensing signaling molecules 2-heptyl-4(1H)-quinolone (HHQ) and 2-heptyl-3-hydroxy-4(1H)-quinolone (Pseudomonas quinolone signal or PQS), which are important for biofilm formation and virulence. The PqsC/PqsB complex catalyzes the condensation of 2-aminobenzoylacetate (2-ABA) and octanoyl-CoA to form HHQ. First, PqsC acquires an octanoyl group from octanoyl-CoA and forms an octanoyl-PqsC intermediate. Then, together with PqsB, it catalyzes the coupling of 2-ABA with the octanoate group, leading to decarboxylation and dehydration, and resulting in closure of the quinoline ring. This is 2-heptyl-4(1H)-quinolone synthase subunit PqsC from Pseudomonas aeruginosa (strain ATCC 15692 / DSM 22644 / CIP 104116 / JCM 14847 / LMG 12228 / 1C / PRS 101 / PAO1).